Here is a 315-residue protein sequence, read N- to C-terminus: Methenyltetrahydromethanopterin cyclohydrolase (315 aa).

Belongs to the MCH family.

It localises to the cytoplasm. It catalyses the reaction 5,10-methenyl-5,6,7,8-tetrahydromethanopterin + H2O = N(5)-formyl-5,6,7,8-tetrahydromethanopterin + H(+). It functions in the pathway one-carbon metabolism; methanogenesis from CO(2); 5,10-methenyl-5,6,7,8-tetrahydromethanopterin from CO(2): step 3/3. Functionally, catalyzes the reversible interconversion of 5-formyl-H(4)MPT to methenyl-H(4)MPT(+). The polypeptide is Methenyltetrahydromethanopterin cyclohydrolase (Methanosphaerula palustris (strain ATCC BAA-1556 / DSM 19958 / E1-9c)).